The chain runs to 91 residues: Cell division protein FtsB (91 aa).

The Cytoplasmic segment spans residues 1 to 3; the sequence is MKF. Residues 4 to 21 form a helical membrane-spanning segment; that stretch reads IVGLLLVLLLALQYQLWI. The Periplasmic portion of the chain corresponds to 22 to 91; that stretch reads SKDGLGELRQ…ETFFQVVEEP (70 aa). The stretch at 26 to 74 forms a coiled coil; sequence LGELRQLSRSIKQQRHENATLIERNQVLKAEVQDLKSGLDALEERARSG.

This sequence belongs to the FtsB family. In terms of assembly, part of a complex composed of FtsB, FtsL and FtsQ.

Its subcellular location is the cell inner membrane. Essential cell division protein. May link together the upstream cell division proteins, which are predominantly cytoplasmic, with the downstream cell division proteins, which are predominantly periplasmic. This is Cell division protein FtsB from Nitrosococcus oceani (strain ATCC 19707 / BCRC 17464 / JCM 30415 / NCIMB 11848 / C-107).